Here is a 35-residue protein sequence, read N- to C-terminus: MEALVYTFLLVSTLGIIFFAIFFREPPKVPTKGGK.

The chain crosses the membrane as a helical span at residues 3-23 (ALVYTFLLVSTLGIIFFAIFF).

This sequence belongs to the PsbT family. In terms of assembly, PSII is composed of 1 copy each of membrane proteins PsbA, PsbB, PsbC, PsbD, PsbE, PsbF, PsbH, PsbI, PsbJ, PsbK, PsbL, PsbM, PsbT, PsbY, PsbZ, Psb30/Ycf12, at least 3 peripheral proteins of the oxygen-evolving complex and a large number of cofactors. It forms dimeric complexes.

It localises to the plastid. Its subcellular location is the chloroplast thylakoid membrane. Found at the monomer-monomer interface of the photosystem II (PS II) dimer, plays a role in assembly and dimerization of PSII. PSII is a light-driven water plastoquinone oxidoreductase, using light energy to abstract electrons from H(2)O, generating a proton gradient subsequently used for ATP formation. The sequence is that of Photosystem II reaction center protein T from Cedrus deodara (Deodar cedar).